We begin with the raw amino-acid sequence, 160 residues long: NADH-quinone oxidoreductase subunit B (160 aa).

[4Fe-4S] cluster contacts are provided by C37, C38, C102, and C132.

It belongs to the complex I 20 kDa subunit family. In terms of assembly, NDH-1 is composed of 14 different subunits. Subunits NuoB, C, D, E, F, and G constitute the peripheral sector of the complex. The cofactor is [4Fe-4S] cluster.

Its subcellular location is the cell inner membrane. The catalysed reaction is a quinone + NADH + 5 H(+)(in) = a quinol + NAD(+) + 4 H(+)(out). Its function is as follows. NDH-1 shuttles electrons from NADH, via FMN and iron-sulfur (Fe-S) centers, to quinones in the respiratory chain. Couples the redox reaction to proton translocation (for every two electrons transferred, four hydrogen ions are translocated across the cytoplasmic membrane), and thus conserves the redox energy in a proton gradient. The protein is NADH-quinone oxidoreductase subunit B of Neisseria gonorrhoeae (strain NCCP11945).